A 718-amino-acid polypeptide reads, in one-letter code: Exostosin-2 (718 aa).

Over 1 to 25 (MCASVKYNIRGPALIPRMKTKHRIY) the chain is Cytoplasmic. The helical; Signal-anchor for type II membrane protein transmembrane segment at 26–46 (YITLFSIVLLGLIATGMFQFW) threads the bilayer. Topologically, residues 47 to 718 (PHSIESSGDW…LKSFPNIGSL (672 aa)) are lumenal. 4 disulfide bridges follow: Cys-85-Cys-90, Cys-96-Cys-151, Cys-286-Cys-300, and Cys-318-Cys-339. An N-linked (GlcNAc...) asparagine glycan is attached at Asn-288. Residues Leu-461, Arg-465, Asn-490, and Asn-517 each contribute to the UDP site. Residues Arg-465, Asn-490, Asn-517, Arg-522, Asp-538, Asp-539, and Asp-540 each coordinate UDP-N-acetyl-alpha-D-glucosamine. Asp-538 and Asp-539 together coordinate UDP. Mn(2+) is bound at residue Asp-540. The a protein site is built by Tyr-582 and Ser-584. Residues Cys-626 and Cys-676 are joined by a disulfide bond. UDP-N-acetyl-alpha-D-glucosamine is bound by residues Glu-627 and Asp-628. Residue Asn-637 is glycosylated (N-linked (GlcNAc...) asparagine). Residues Lys-651 and Lys-653 each contribute to the a protein site. Arg-673 serves as a coordination point for UDP-N-acetyl-alpha-D-glucosamine.

It belongs to the glycosyltransferase 47 family. Part of the heparan sulfate polymerase, a dimeric complex composed of EXT1 and EXT2. Could also form homooligomeric complexes. Interacts with NDST1. Interacts with GALNT5. It depends on Mn(2+) as a cofactor. In terms of processing, a soluble form is generated by proteolytic processing. Post-translationally, N-glycosylated at Asn-637.

The protein localises to the golgi apparatus membrane. The protein resides in the golgi apparatus. It is found in the cis-Golgi network membrane. Its subcellular location is the endoplasmic reticulum membrane. It localises to the secreted. It carries out the reaction 3-O-{[(1-&gt;4)-beta-D-GlcA-(1-&gt;4)-alpha-D-GlcNAc](n)-(1-&gt;4)-beta-D-GlcA-(1-&gt;3)-beta-D-Gal-(1-&gt;3)-beta-D-Gal-(1-&gt;4)-beta-D-Xyl}-L-seryl-[protein] + UDP-N-acetyl-alpha-D-glucosamine = 3-O-{alpha-D-GlcNAc-[(1-&gt;4)-beta-D-GlcA-(1-&gt;4)-alpha-D-GlcNAc](n)-(1-&gt;4)-beta-D-GlcA-(1-&gt;3)-beta-D-Gal-(1-&gt;3)-beta-D-Gal-(1-&gt;4)-beta-D-Xyl}-L-seryl-[protein] + UDP + H(+). The protein operates within protein modification; protein glycosylation. In terms of biological role, glycosyltransferase forming with EXT1 the heterodimeric heparan sulfate polymerase which catalyzes the elongation of the heparan sulfate glycan backbone. Glycan backbone extension consists in the alternating transfer of (1-&gt;4)-beta-D-GlcA and (1-&gt;4)-alpha-D-GlcNAc residues from their respective UDP-sugar donors. Both EXT1 and EXT2 are required for the full activity of the polymerase since EXT1 bears the N-acetylglucosaminyl-proteoglycan 4-beta-glucuronosyltransferase activity within the complex while EXT2 carries the glucuronosyl-N-acetylglucosaminyl-proteoglycan 4-alpha-N-acetylglucosaminyltransferase activity. Heparan sulfate proteoglycans are ubiquitous components of the extracellular matrix and play an important role in tissue homeostasis and signaling. The protein is Exostosin-2 of Bos taurus (Bovine).